The chain runs to 134 residues: ATP synthase epsilon chain (134 aa).

Belongs to the ATPase epsilon chain family. F-type ATPases have 2 components, CF(1) - the catalytic core - and CF(0) - the membrane proton channel. CF(1) has five subunits: alpha(3), beta(3), gamma(1), delta(1), epsilon(1). CF(0) has three main subunits: a, b and c.

It localises to the cell membrane. Functionally, produces ATP from ADP in the presence of a proton gradient across the membrane. In Clostridium botulinum (strain Eklund 17B / Type B), this protein is ATP synthase epsilon chain.